The sequence spans 421 residues: NADH-quinone oxidoreductase subunit F 2 (421 aa).

Glycine 53–glycine 62 contributes to the NAD(+) binding site. Position 165 to 212 (glycine 165 to threonine 212) interacts with FMN. [4Fe-4S] cluster is bound by residues cysteine 342, cysteine 345, cysteine 348, and cysteine 388.

Belongs to the complex I 51 kDa subunit family. FMN is required as a cofactor. Requires [4Fe-4S] cluster as cofactor.

It carries out the reaction a quinone + NADH + 5 H(+)(in) = a quinol + NAD(+) + 4 H(+)(out). In terms of biological role, NDH-1 shuttles electrons from NADH, via FMN and iron-sulfur (Fe-S) centers, to quinones in the respiratory chain. The immediate electron acceptor for the enzyme in this species is believed to be ubiquinone. Couples the redox reaction to proton translocation (for every two electrons transferred, four hydrogen ions are translocated across the cytoplasmic membrane), and thus conserves the redox energy in a proton gradient. The sequence is that of NADH-quinone oxidoreductase subunit F 2 (nuoF2) from Rhizobium meliloti (strain 1021) (Ensifer meliloti).